Consider the following 551-residue polypeptide: Probable 4-coumarate--CoA ligase 1 (551 aa).

ATP contacts are provided by serine 205, serine 206, glycine 207, threonine 208, threonine 209, and lysine 213. Position 253 (tyrosine 253) interacts with (E)-4-coumaroyl-AMP. Lysine 274 contributes to the CoA binding site. Positions 276-346 (EPVRFLELIQ…RFKGRLVIKQ (71 aa)) are SBD1. Positions 323, 346, 347, and 351 each coordinate (E)-4-coumaroyl-AMP. ATP contacts are provided by glutamine 346, glycine 347, threonine 351, aspartate 430, and arginine 445. An SBD2 region spans residues 347 to 409 (GYGATELSPA…IKGPNVMLGY (63 aa)). (E)-4-coumaroyl-AMP-binding residues include lysine 447 and lysine 451. Residues lysine 453 and glycine 454 each coordinate CoA. Lysine 537 contacts ATP.

This sequence belongs to the ATP-dependent AMP-binding enzyme family. The cofactor is Mg(2+).

The catalysed reaction is (E)-4-coumarate + ATP + CoA = (E)-4-coumaroyl-CoA + AMP + diphosphate. It catalyses the reaction (E)-4-coumarate + ATP + H(+) = (E)-4-coumaroyl-AMP + diphosphate. The enzyme catalyses (E)-4-coumaroyl-AMP + CoA = (E)-4-coumaroyl-CoA + AMP + H(+). The protein operates within phytoalexin biosynthesis; 3,4',5-trihydroxystilbene biosynthesis; 3,4',5-trihydroxystilbene from trans-4-coumarate: step 1/2. Carboxylate--CoA ligase that may use 4-coumarate as substrate. Follows a two-step reaction mechanism, wherein the carboxylate substrate first undergoes adenylation by ATP, followed by a thioesterification in the presence of CoA to yield the final CoA thioester. The sequence is that of Probable 4-coumarate--CoA ligase 1 (4cl1) from Dictyostelium discoideum (Social amoeba).